Here is a 187-residue protein sequence, read N- to C-terminus: Structural protein ORF187 (187 aa).

Residues isoleucine 65 to alanine 85 form a helical membrane-spanning segment.

It is found in the host membrane. It localises to the virion. The chain is Structural protein ORF187 from Acidianus two-tailed virus (ATV).